A 413-amino-acid polypeptide reads, in one-letter code: uncharacterized protein (413 aa).

This is an uncharacterized protein from Mycoplasma pneumoniae (strain ATCC 29342 / M129 / Subtype 1) (Mycoplasmoides pneumoniae).